We begin with the raw amino-acid sequence, 335 residues long: Agamous-like MADS-box protein AGL104 (335 aa).

In terms of domain architecture, MADS-box spans 1-61 (MGRVKLEIKR…DRLSLFSGKT (61 aa)). Residues 124–151 (SDVEELEHEVCRLQQQLQMAEEELRRYE) are a coiled coil. The interval 302–335 (MPAQQSDIPGVTAETQVDHEVSDYETKVPQLSSQ) is disordered. Residues 317–327 (QVDHEVSDYET) are compositionally biased toward basic and acidic residues.

Forms heterodimers with AGL30 and AGL65. Expressed in pollen.

It is found in the nucleus. In terms of biological role, probable transcription factor that forms heterodimers with the MADS-box proteins AGL30 and AGL65 and is involved in the regulation of pollen maturation at the late stages of pollen development and pollen tube growth. This chain is Agamous-like MADS-box protein AGL104, found in Arabidopsis thaliana (Mouse-ear cress).